Reading from the N-terminus, the 266-residue chain is Glutamate racemase (266 aa).

Residues 9–10 (DS) and 41–42 (YG) each bind substrate. The active-site Proton donor/acceptor is Cys-72. 73–74 (NT) is a substrate binding site. Residue Cys-183 is the Proton donor/acceptor of the active site. 184 to 185 (TH) is a binding site for substrate.

The protein belongs to the aspartate/glutamate racemases family.

The enzyme catalyses L-glutamate = D-glutamate. The protein operates within cell wall biogenesis; peptidoglycan biosynthesis. Provides the (R)-glutamate required for cell wall biosynthesis. The protein is Glutamate racemase of Listeria innocua serovar 6a (strain ATCC BAA-680 / CLIP 11262).